Consider the following 256-residue polypeptide: Coiled-coil domain-containing protein 90B, mitochondrial (256 aa).

A mitochondrion-targeting transit peptide spans 1–42 (MRNRWIWRFLRPECSGIRWISSPHGRLSPALRRGFLTTTTKS). Positions 106–164 (AQQEITIQQLMAHLDSIRKDMVILEKSEFANLRAENEKMKIELDQVKQQLINETSRIRA) form a coiled coil. A helical membrane pass occupies residues 231–253 (TIRYLAASVFTCLAIALGFYRFW).

This sequence belongs to the CCDC90 family. Interacts with MCU.

It is found in the mitochondrion membrane. This Rattus norvegicus (Rat) protein is Coiled-coil domain-containing protein 90B, mitochondrial (Ccdc90b).